The following is a 149-amino-acid chain: Transcriptional regulator MraZ (149 aa).

2 SpoVT-AbrB domains span residues 7–54 (KYVN…GISH) and 83–126 (AVQL…QPQN).

Belongs to the MraZ family. In terms of assembly, forms oligomers.

The protein localises to the cytoplasm. It is found in the nucleoid. The chain is Transcriptional regulator MraZ from Rickettsia felis (strain ATCC VR-1525 / URRWXCal2) (Rickettsia azadi).